A 472-amino-acid chain; its full sequence is tRNA-2-methylthio-N(6)-dimethylallyladenosine synthase (472 aa).

One can recognise an MTTase N-terminal domain in the interval 22–142 (RKVFVKTYGC…LPDALKRARA (121 aa)). [4Fe-4S] cluster contacts are provided by Cys-31, Cys-67, Cys-105, Cys-183, Cys-187, and Cys-190. Positions 169–403 (RARGVTAFLT…LLVKQQRGFA (235 aa)) constitute a Radical SAM core domain. The TRAM domain occupies 404–466 (EACVGREIDL…PNSLFAEMIG (63 aa)).

It belongs to the methylthiotransferase family. MiaB subfamily. In terms of assembly, monomer. [4Fe-4S] cluster serves as cofactor.

The protein resides in the cytoplasm. It carries out the reaction N(6)-dimethylallyladenosine(37) in tRNA + (sulfur carrier)-SH + AH2 + 2 S-adenosyl-L-methionine = 2-methylsulfanyl-N(6)-dimethylallyladenosine(37) in tRNA + (sulfur carrier)-H + 5'-deoxyadenosine + L-methionine + A + S-adenosyl-L-homocysteine + 2 H(+). Catalyzes the methylthiolation of N6-(dimethylallyl)adenosine (i(6)A), leading to the formation of 2-methylthio-N6-(dimethylallyl)adenosine (ms(2)i(6)A) at position 37 in tRNAs that read codons beginning with uridine. This is tRNA-2-methylthio-N(6)-dimethylallyladenosine synthase from Rhizobium meliloti (strain 1021) (Ensifer meliloti).